The primary structure comprises 404 residues: NADH-quinone oxidoreductase subunit D 2 (404 aa).

This sequence belongs to the complex I 49 kDa subunit family. In terms of assembly, NDH-1 is composed of 14 different subunits. Subunits NuoB, C, D, E, F, and G constitute the peripheral sector of the complex.

Its subcellular location is the cell inner membrane. The catalysed reaction is a quinone + NADH + 5 H(+)(in) = a quinol + NAD(+) + 4 H(+)(out). Its function is as follows. NDH-1 shuttles electrons from NADH, via FMN and iron-sulfur (Fe-S) centers, to quinones in the respiratory chain. The immediate electron acceptor for the enzyme in this species is believed to be ubiquinone. Couples the redox reaction to proton translocation (for every two electrons transferred, four hydrogen ions are translocated across the cytoplasmic membrane), and thus conserves the redox energy in a proton gradient. In Rhizobium etli (strain ATCC 51251 / DSM 11541 / JCM 21823 / NBRC 15573 / CFN 42), this protein is NADH-quinone oxidoreductase subunit D 2.